We begin with the raw amino-acid sequence, 535 residues long: GMP synthase [glutamine-hydrolyzing] (535 aa).

A Glutamine amidotransferase type-1 domain is found at 24 to 217 (KILIVDFGSQ…VRNISGLGGD (194 aa)). Cysteine 101 acts as the Nucleophile in catalysis. Residues histidine 191 and glutamate 193 contribute to the active site. The GMPS ATP-PPase domain occupies 218-410 (WTMHAFREEE…LGLPDVFVGR (193 aa)). 245–251 (SGGVDSA) provides a ligand contact to ATP.

Homodimer.

The enzyme catalyses XMP + L-glutamine + ATP + H2O = GMP + L-glutamate + AMP + diphosphate + 2 H(+). It functions in the pathway purine metabolism; GMP biosynthesis; GMP from XMP (L-Gln route): step 1/1. Functionally, catalyzes the synthesis of GMP from XMP. In Bradyrhizobium sp. (strain ORS 278), this protein is GMP synthase [glutamine-hydrolyzing].